The primary structure comprises 668 residues: 1-deoxy-D-xylulose-5-phosphate synthase (668 aa).

Residues His-105 and 146–148 (AHS) each bind thiamine diphosphate. Asp-177 is a binding site for Mg(2+). Thiamine diphosphate-binding positions include 178–179 (GA), Asn-206, Tyr-316, and Glu-398. Asn-206 lines the Mg(2+) pocket.

The protein belongs to the transketolase family. DXPS subfamily. In terms of assembly, homodimer. Mg(2+) is required as a cofactor. Requires thiamine diphosphate as cofactor.

The catalysed reaction is D-glyceraldehyde 3-phosphate + pyruvate + H(+) = 1-deoxy-D-xylulose 5-phosphate + CO2. The protein operates within metabolic intermediate biosynthesis; 1-deoxy-D-xylulose 5-phosphate biosynthesis; 1-deoxy-D-xylulose 5-phosphate from D-glyceraldehyde 3-phosphate and pyruvate: step 1/1. Catalyzes the acyloin condensation reaction between C atoms 2 and 3 of pyruvate and glyceraldehyde 3-phosphate to yield 1-deoxy-D-xylulose-5-phosphate (DXP). This Nitrobacter hamburgensis (strain DSM 10229 / NCIMB 13809 / X14) protein is 1-deoxy-D-xylulose-5-phosphate synthase.